Here is a 204-residue protein sequence, read N- to C-terminus: Dihydroorotase (204 aa).

Histidine 34 provides a ligand contact to Zn(2+). Position 79 (leucine 79) interacts with substrate. A Zn(2+)-binding site is contributed by aspartate 107. Residue aspartate 107 is part of the active site. 2 residues coordinate substrate: histidine 111 and alanine 123.

It belongs to the metallo-dependent hydrolases superfamily. DHOase family. Class II DHOase subfamily. Homodimer. It depends on Zn(2+) as a cofactor.

It carries out the reaction (S)-dihydroorotate + H2O = N-carbamoyl-L-aspartate + H(+). The protein operates within pyrimidine metabolism; UMP biosynthesis via de novo pathway; (S)-dihydroorotate from bicarbonate: step 3/3. In terms of biological role, catalyzes the reversible cyclization of carbamoyl aspartate to dihydroorotate. The chain is Dihydroorotase from Serratia marcescens.